We begin with the raw amino-acid sequence, 102 residues long: Small ribosomal subunit protein uS10 (102 aa).

It belongs to the universal ribosomal protein uS10 family. Part of the 30S ribosomal subunit.

Its function is as follows. Involved in the binding of tRNA to the ribosomes. The polypeptide is Small ribosomal subunit protein uS10 (Saccharolobus islandicus (strain M.16.4 / Kamchatka #3) (Sulfolobus islandicus)).